Here is a 429-residue protein sequence, read N- to C-terminus: MNAPDATPVIALMDRLGSAARSASTAMAAASTAAKNAALLALAREIRAGAARLAAENARDLDVATRAGLAAPMVDRLRLTDKVIALMAEGCEQVAALPDPIGEMTNLRRRPSGITVGQMRVPLGVFGMVYESRPNVTIDAASLAIKSGNAAILRGGSEALHSNTALMALVVRALAEAGLPGDAVQLVPTTDRAAVGRLIAMPQYVDVIIPRGGKGLIERIAAEATVPVIKHLDGNCHVYVDAGADLDLAVRVTDNAKTQKYSPCNAAESLLVHRDVAAAFLPRIGAVFAAKGVEMRCGPRAKALLAAVPGAKLVDATEADWAEEYLAPVISIKLVDSLDEAIARINRYGSHHTDAILTTNHPNAMRFLREVDSASVMVNASTRFADGFEFGLGAEIGISTDKFHARGPVGLEGLTSMKWVVFGQGEVRT.

It belongs to the gamma-glutamyl phosphate reductase family.

It localises to the cytoplasm. It catalyses the reaction L-glutamate 5-semialdehyde + phosphate + NADP(+) = L-glutamyl 5-phosphate + NADPH + H(+). The protein operates within amino-acid biosynthesis; L-proline biosynthesis; L-glutamate 5-semialdehyde from L-glutamate: step 2/2. Catalyzes the NADPH-dependent reduction of L-glutamate 5-phosphate into L-glutamate 5-semialdehyde and phosphate. The product spontaneously undergoes cyclization to form 1-pyrroline-5-carboxylate. The protein is Gamma-glutamyl phosphate reductase of Methylibium petroleiphilum (strain ATCC BAA-1232 / LMG 22953 / PM1).